A 79-amino-acid chain; its full sequence is ATP synthase subunit c (79 aa).

Transmembrane regions (helical) follow at residues 11-31 and 53-73; these read MAAA…IGIL and FFIV…LGLY.

The protein belongs to the ATPase C chain family. As to quaternary structure, F-type ATPases have 2 components, F(1) - the catalytic core - and F(0) - the membrane proton channel. F(1) has five subunits: alpha(3), beta(3), gamma(1), delta(1), epsilon(1). F(0) has three main subunits: a(1), b(2) and c(10-14). The alpha and beta chains form an alternating ring which encloses part of the gamma chain. F(1) is attached to F(0) by a central stalk formed by the gamma and epsilon chains, while a peripheral stalk is formed by the delta and b chains.

Its subcellular location is the cell inner membrane. Functionally, f(1)F(0) ATP synthase produces ATP from ADP in the presence of a proton or sodium gradient. F-type ATPases consist of two structural domains, F(1) containing the extramembraneous catalytic core and F(0) containing the membrane proton channel, linked together by a central stalk and a peripheral stalk. During catalysis, ATP synthesis in the catalytic domain of F(1) is coupled via a rotary mechanism of the central stalk subunits to proton translocation. In terms of biological role, key component of the F(0) channel; it plays a direct role in translocation across the membrane. A homomeric c-ring of between 10-14 subunits forms the central stalk rotor element with the F(1) delta and epsilon subunits. In Proteus mirabilis (strain HI4320), this protein is ATP synthase subunit c.